A 67-amino-acid polypeptide reads, in one-letter code: UPF0181 protein KPK_1966 (67 aa).

The tract at residues 48-67 (EQIVARFEDEDEDQDEDEDD) is disordered. Positions 55–67 (EDEDEDQDEDEDD) are enriched in acidic residues.

It belongs to the UPF0181 family.

This is UPF0181 protein KPK_1966 from Klebsiella pneumoniae (strain 342).